A 576-amino-acid chain; its full sequence is uncharacterized protein (576 aa).

Over residues 241–261 (DNTKAPSPTNTAGSRELSTPA) the composition is skewed to polar residues. The interval 241 to 270 (DNTKAPSPTNTAGSRELSTPAGSPGKASLP) is disordered.

This is an uncharacterized protein from Bacillus subtilis (strain 168).